The chain runs to 432 residues: Amino-acid acetyltransferase (432 aa).

Positions 286 to 425 constitute an N-acetyltransferase domain; sequence ERVREAAIED…ASLYNYQRNS (140 aa).

This sequence belongs to the acetyltransferase family. ArgA subfamily.

The protein resides in the cytoplasm. It carries out the reaction L-glutamate + acetyl-CoA = N-acetyl-L-glutamate + CoA + H(+). Its pathway is amino-acid biosynthesis; L-arginine biosynthesis; N(2)-acetyl-L-ornithine from L-glutamate: step 1/4. This chain is Amino-acid acetyltransferase, found in Pseudomonas fluorescens (strain ATCC BAA-477 / NRRL B-23932 / Pf-5).